Consider the following 473-residue polypeptide: Hyaluronidase-2 (473 aa).

A signal peptide spans 1–20 (MWTGLGPAVTLALVLVVAWA). 2 disulfide bridges follow: C47/C343 and C214/C230. 2 N-linked (GlcNAc...) asparagine glycosylation sites follow: N77 and N106. The active-site Proton donor is the E138. Residues N340 and N360 are each glycosylated (N-linked (GlcNAc...) asparagine). The EGF-like domain maps to 364–442 (AAQYCSWAQC…YLGWGGEQCQ (79 aa)). Intrachain disulfides connect C368–C379, C373–C430, and C432–C441. G451 carries the GPI-anchor amidated glycine lipid modification. A propeptide spans 452-473 (ASGAWAGSHLTGLLAVAVLAFT) (removed in mature form).

The protein belongs to the glycosyl hydrolase 56 family. Interacts with MST1R.

The protein resides in the cell membrane. It catalyses the reaction Random hydrolysis of (1-&gt;4)-linkages between N-acetyl-beta-D-glucosamine and D-glucuronate residues in hyaluronate.. In terms of biological role, catalyzes hyaluronan degradation into small fragments that are endocytosed and degraded in lysosomes by HYAL1 and exoglycosidases. Essential for the breakdown of extracellular matrix hyaluronan. In Bos taurus (Bovine), this protein is Hyaluronidase-2 (HYAL2).